Reading from the N-terminus, the 652-residue chain is Anaphase-promoting complex subunit 4 (652 aa).

In terms of assembly, the APC/C is composed of at least 13 subunits that stay tightly associated throughout the cell cycle: APC1, APC2, APC4, APC5, APC9, APC11, CDC16, CDC23, CDC26, CDC27, DOC1, MND2 and SWM1.

The protein resides in the cytoplasm. The protein localises to the nucleus. It functions in the pathway protein modification; protein ubiquitination. Component of the anaphase promoting complex/cyclosome (APC/C), a cell cycle-regulated E3 ubiquitin-protein ligase complex that controls progression through mitosis and the G1 phase of the cell cycle. The APC/C is thought to confer substrate specificity and, in the presence of ubiquitin-conjugating E2 enzymes, it catalyzes the formation of protein-ubiquitin conjugates that are subsequently degraded by the 26S proteasome. In early mitosis, the APC/C is activated by CDC20 and targets securin PDS1, the B-type cyclin CLB5, and other anaphase inhibitory proteins for proteolysis, thereby triggering the separation of sister chromatids at the metaphase-to-anaphase transition. In late mitosis and in G1, degradation of CLB5 allows activation of the APC/C by CDH1, which is needed to destroy CDC20 and the B-type cyclin CLB2 to allow exit from mitosis and creating the low CDK state necessary for cytokinesis and for reforming prereplicative complexes in G1 prior to another round of replication. This Saccharomyces cerevisiae (strain ATCC 204508 / S288c) (Baker's yeast) protein is Anaphase-promoting complex subunit 4 (APC4).